The chain runs to 510 residues: ATP synthase subunit alpha (510 aa).

169-176 (GDRQTGKT) contributes to the ATP binding site.

This sequence belongs to the ATPase alpha/beta chains family. F-type ATPases have 2 components, CF(1) - the catalytic core - and CF(0) - the membrane proton channel. CF(1) has five subunits: alpha(3), beta(3), gamma(1), delta(1), epsilon(1). CF(0) has three main subunits: a(1), b(2) and c(9-12). The alpha and beta chains form an alternating ring which encloses part of the gamma chain. CF(1) is attached to CF(0) by a central stalk formed by the gamma and epsilon chains, while a peripheral stalk is formed by the delta and b chains.

Its subcellular location is the cell inner membrane. The catalysed reaction is ATP + H2O + 4 H(+)(in) = ADP + phosphate + 5 H(+)(out). Produces ATP from ADP in the presence of a proton gradient across the membrane. The alpha chain is a regulatory subunit. The protein is ATP synthase subunit alpha of Rickettsia felis (strain ATCC VR-1525 / URRWXCal2) (Rickettsia azadi).